Here is a 378-residue protein sequence, read N- to C-terminus: Lactosylceramide 1,3-N-acetyl-beta-D-glucosaminyltransferase (378 aa).

The Cytoplasmic portion of the chain corresponds to 1–14 (MRMLVSGRRVKKWQ). A helical; Signal-anchor for type II membrane protein membrane pass occupies residues 15–35 (LIIQLFATCFLASLMFFWEPI). Residues 36–378 (DNHIVSHMKS…DTYPCRAAFI (343 aa)) are Lumenal-facing. Asn-59 carries N-linked (GlcNAc...) asparagine glycosylation.

The protein belongs to the glycosyltransferase 31 family. Widely expressed. Highly expressed in lung, colon, placenta, testis, pituitary gland and cerebellum. Weakly expressed in brain, liver, spleen, lymph node and thymus.

Its subcellular location is the golgi apparatus membrane. The catalysed reaction is a beta-D-Gal-(1-&gt;4)-beta-D-Glc-(1&lt;-&gt;1)-Cer(d18:1(4E)) + UDP-N-acetyl-alpha-D-glucosamine = a beta-D-GlcNAc-(1-&gt;3)-beta-D-Gal-(1-&gt;4)-beta-D-Glc-(1&lt;-&gt;1)-Cer(d18:1(4E)) + UDP + H(+). The enzyme catalyses a neolactoside nLc4Cer(d18:1(4E)) + UDP-N-acetyl-alpha-D-glucosamine = a neolactoside IV(3)-beta-GlcNAc-nLc4Cer(d18:1(4E)) + UDP + H(+). The protein operates within protein modification; protein glycosylation. Beta-1,3-N-acetylglucosaminyltransferase that plays a key role in the synthesis of lacto- or neolacto-series carbohydrate chains on glycolipids, notably by participating in biosynthesis of HNK-1 and Lewis X carbohydrate structures. Has strong activity toward lactosylceramide (LacCer) and neolactotetraosylceramide (nLc(4)Cer; paragloboside), resulting in the synthesis of Lc(3)Cer and neolactopentaosylceramide (nLc(5)Cer), respectively. Probably plays a central role in regulating neolacto-series glycolipid synthesis during embryonic development. The chain is Lactosylceramide 1,3-N-acetyl-beta-D-glucosaminyltransferase from Homo sapiens (Human).